The primary structure comprises 505 residues: Kinesin light chain 3 (505 aa).

The disordered stretch occupies residues 1 to 20 (MSVQVAAPGGLGLGLERPSP). Residues 88-150 (LLALSAHVGA…EEEKSHLEFL (63 aa)) adopt a coiled-coil conformation. The interval 157–193 (DPPAESQQPESPPRRDSLASLFPSEEEERRGPEAVGA) is disordered. Serine 173 bears the Phosphoserine mark. 5 TPR repeats span residues 207–240 (LRTL…LERS), 249–282 (ATML…REQT), 291–324 (AATL…REKV), 333–366 (AKQL…YEAL), and 375–408 (AKTK…EALP). Residues 409 to 505 (APLGAPNTGT…STSTQDLGPR (97 aa)) form a disordered region. Over residues 416–434 (TGTTSDTQQQTLSRSSSFS) the composition is skewed to low complexity. Basic and acidic residues predominate over residues 435–453 (KLRESIRRGSEKLVSRLRG). Serine 467 is subject to Phosphoserine. Polar residues predominate over residues 489–505 (SEASRTLSTSTQDLGPR). Threonine 499 is modified (phosphothreonine).

Belongs to the kinesin light chain family. In terms of assembly, oligomer composed of two heavy chains and two light chains. Associates with microtubulin in an ATP-dependent manner. Interacts with KIF5C. Interacts with ODF1. Interacts with LRGUK. Interacts with VDAC2.

The protein resides in the cytoplasm. Its subcellular location is the cytoskeleton. It localises to the mitochondrion. Functionally, kinesin is a microtubule-associated force-producing protein that may play a role in organelle transport. Plays a role during spermiogenesis in the development of the sperm tail midpiece and in the normal function of spermatozoa. May play a role in the formation of the mitochondrial sheath formation in the developing spermatid midpiece. The protein is Kinesin light chain 3 (KLC3) of Bos taurus (Bovine).